We begin with the raw amino-acid sequence, 217 residues long: 3,4-dihydroxy-2-butanone 4-phosphate synthase (217 aa).

D-ribulose 5-phosphate contacts are provided by residues 37 to 38, aspartate 42, 150 to 154, and glutamate 174; these read RE and RGGHT. Glutamate 38 is a binding site for Mg(2+). Histidine 153 is a binding site for Mg(2+).

Belongs to the DHBP synthase family. In terms of assembly, homodimer. It depends on Mg(2+) as a cofactor. Mn(2+) is required as a cofactor.

It catalyses the reaction D-ribulose 5-phosphate = (2S)-2-hydroxy-3-oxobutyl phosphate + formate + H(+). Its pathway is cofactor biosynthesis; riboflavin biosynthesis; 2-hydroxy-3-oxobutyl phosphate from D-ribulose 5-phosphate: step 1/1. Its function is as follows. Catalyzes the conversion of D-ribulose 5-phosphate to formate and 3,4-dihydroxy-2-butanone 4-phosphate. In Enterobacter sp. (strain 638), this protein is 3,4-dihydroxy-2-butanone 4-phosphate synthase.